We begin with the raw amino-acid sequence, 34 residues long: Photosystem II reaction center protein M (34 aa).

The helical transmembrane segment at 5-25 threads the bilayer; that stretch reads ILAFIATALFVLIPTAFLIIL.

It belongs to the PsbM family. As to quaternary structure, PSII is composed of 1 copy each of membrane proteins PsbA, PsbB, PsbC, PsbD, PsbE, PsbF, PsbH, PsbI, PsbJ, PsbK, PsbL, PsbM, PsbT, PsbX, PsbY, PsbZ, Psb30/Ycf12, at least 3 peripheral proteins of the oxygen-evolving complex and a large number of cofactors. It forms dimeric complexes.

It localises to the plastid. The protein resides in the chloroplast thylakoid membrane. Its function is as follows. One of the components of the core complex of photosystem II (PSII). PSII is a light-driven water:plastoquinone oxidoreductase that uses light energy to abstract electrons from H(2)O, generating O(2) and a proton gradient subsequently used for ATP formation. It consists of a core antenna complex that captures photons, and an electron transfer chain that converts photonic excitation into a charge separation. This subunit is found at the monomer-monomer interface. This Zygnema circumcarinatum (Green alga) protein is Photosystem II reaction center protein M.